A 312-amino-acid chain; its full sequence is Cytochrome c biogenesis protein CcsA (312 aa).

The next 8 membrane-spanning stretches (helical) occupy residues 18 to 38, 48 to 68, 73 to 93, 102 to 122, 148 to 168, 216 to 236, 250 to 267, and 279 to 299; these read LGIL…LALF, FFTI…WILS, ISNL…GQLL, IIPV…CFVL, VMLS…VLFI, SILV…IWAN, TWAF…HMRI, and FATS…FLGI.

The protein belongs to the CcmF/CycK/Ccl1/NrfE/CcsA family. In terms of assembly, may interact with ccs1.

Its subcellular location is the cellular thylakoid membrane. Its function is as follows. Required during biogenesis of c-type cytochromes (cytochrome c6 and cytochrome f) at the step of heme attachment. The protein is Cytochrome c biogenesis protein CcsA of Prochlorococcus marinus (strain MIT 9515).